We begin with the raw amino-acid sequence, 311 residues long: Protein translocase subunit SecF (311 aa).

The next 6 helical transmembrane spans lie at 19–39 (AIYA…TQGL), 142–162 (MLAM…RFEL), 166–186 (LGAV…FSVL), 192–212 (LVVV…TIVV), 245–265 (ITSL…GAVI), and 272–292 (LLFG…PLVL).

Belongs to the SecD/SecF family. SecF subfamily. As to quaternary structure, forms a complex with SecD. Part of the essential Sec protein translocation apparatus which comprises SecA, SecYEG and auxiliary proteins SecDF-YajC and YidC.

The protein localises to the cell inner membrane. Part of the Sec protein translocase complex. Interacts with the SecYEG preprotein conducting channel. SecDF uses the proton motive force (PMF) to complete protein translocation after the ATP-dependent function of SecA. The chain is Protein translocase subunit SecF from Magnetococcus marinus (strain ATCC BAA-1437 / JCM 17883 / MC-1).